A 102-amino-acid chain; its full sequence is Feather keratin (102 aa).

An N-acetylserine modification is found at serine 1.

This sequence belongs to the avian keratin family. As to quaternary structure, the avian keratins (F-ker, S-ker, C-ker and B-ker) are a complex mixture of very similar polypeptides.

The polypeptide is Feather keratin (Dromaius novaehollandiae (Emu)).